The following is a 286-amino-acid chain: Acyl-CoA thioesterase 2 (286 aa).

Catalysis depends on charge relay system residues D204, T228, and Q278.

This sequence belongs to the C/M/P thioester hydrolase family. As to quaternary structure, homotetramer.

It catalyses the reaction a fatty acyl-CoA + H2O = a fatty acid + CoA + H(+). In terms of biological role, thioesterase that has relatively broad substrate specificity, hydrolyzing primarily medium- and long-chain acyl-CoA substrates to free fatty acids and CoA. In Haemophilus influenzae (strain ATCC 51907 / DSM 11121 / KW20 / Rd), this protein is Acyl-CoA thioesterase 2 (tesB).